Here is a 485-residue protein sequence, read N- to C-terminus: Glutamyl-tRNA(Gln) amidotransferase subunit A (485 aa).

Residues Lys-79 and Ser-154 each act as charge relay system in the active site. Catalysis depends on Ser-178, which acts as the Acyl-ester intermediate.

The protein belongs to the amidase family. GatA subfamily. As to quaternary structure, heterotrimer of A, B and C subunits.

It catalyses the reaction L-glutamyl-tRNA(Gln) + L-glutamine + ATP + H2O = L-glutaminyl-tRNA(Gln) + L-glutamate + ADP + phosphate + H(+). Allows the formation of correctly charged Gln-tRNA(Gln) through the transamidation of misacylated Glu-tRNA(Gln) in organisms which lack glutaminyl-tRNA synthetase. The reaction takes place in the presence of glutamine and ATP through an activated gamma-phospho-Glu-tRNA(Gln). The chain is Glutamyl-tRNA(Gln) amidotransferase subunit A from Staphylococcus aureus (strain bovine RF122 / ET3-1).